A 513-amino-acid polypeptide reads, in one-letter code: ATP synthase subunit alpha (513 aa).

Gly-169–Thr-176 is an ATP binding site.

Belongs to the ATPase alpha/beta chains family. F-type ATPases have 2 components, CF(1) - the catalytic core - and CF(0) - the membrane proton channel. CF(1) has five subunits: alpha(3), beta(3), gamma(1), delta(1), epsilon(1). CF(0) has three main subunits: a(1), b(2) and c(9-12). The alpha and beta chains form an alternating ring which encloses part of the gamma chain. CF(1) is attached to CF(0) by a central stalk formed by the gamma and epsilon chains, while a peripheral stalk is formed by the delta and b chains.

It is found in the cell inner membrane. It catalyses the reaction ATP + H2O + 4 H(+)(in) = ADP + phosphate + 5 H(+)(out). Produces ATP from ADP in the presence of a proton gradient across the membrane. The alpha chain is a regulatory subunit. This Vibrio alginolyticus protein is ATP synthase subunit alpha.